The sequence spans 856 residues: MRVKEKYQHLWRWGWRWGTMLLGMLMICSATEKLWVTVYYGVPVWKEATTTLFCASDAKAYDTEVHNVWATHACVPTDPNPQEVVLVNVTENFNMWKNDMVEQMHEDIISLWDQSLKPCVKLTPLCVSLKCTDLKNDTNTNSSSGRMIMEKGEIKNCSFNISTSIRGKVQKEYAFFYKLDIIPIDNDTTSYTLTSCNTSVITQACPKVSFEPIPIHYCAPAGFAILKCNNKTFNGTGPCTNVSTVQCTHGIRPVVSTQLLLNGSLAEEEVVIRSANFTDNAKTIIVQLNQSVEINCTRPNNNTRKSIRIQRGPGRAFVTIGKIGNMRQAHCNISRAKWNNTLKQIDSKLREQFGNNKTIIFKQSSGGDPEIVTHSFNCGGEFFYCNSTQLFNSTWFNSTWSTKGSNNTEGSDTITLPCRIKQIINMWQEVGKAMYAPPISGQIRCSSNITGLLLTRDGGNSNNESEIFRPGGGDMRDNWRSELYKYKVVKIEPLGVAPTKAKRRVVQREKRAVGIGALFLGFLGAAGSTMGAASMTLTVQARQLLSGIVQQQNNLLRAIEAQQHLLQLTVWGIKQLQARILAVERYLKDQQLLGIWGCSGKLICTTAVPWNASWSNKSLEQIWNNMTWMEWDREINNYTSLIHSLIEESQNQQEKNEQELLELDKWASLWNWFNITNWLWYIKLFIMIVGGLVGLRIVFAVLSVVNRVRQGYSPLSFQTHLPIPRGPDRPEGIEEEGGERDRDRSIRLVNGSLALIWDDLRSLCLFSYHRLRDLLLIVTRIVELLGRRGWEALKYWWNLLQYWSQELKNSAVSLLNATAIAVAEGTDRVIEVVQGAYRAIRHIPRRIRQGLERILL.

The N-terminal stretch at 1–32 (MRVKEKYQHLWRWGWRWGTMLLGMLMICSATE) is a signal peptide. The Extracellular segment spans residues 33–684 (KLWVTVYYGV…ITNWLWYIKL (652 aa)). C54 and C74 are disulfide-bonded. N88, N136, N141, N156, N160, N186, N197, N230, N234, N241, N262, N276, N289, N295, N301, N332, N339, and N356 each carry an N-linked (GlcNAc...) asparagine; by host glycan. Intrachain disulfides connect C119–C205, C126–C196, C131–C157, C218–C247, and C228–C239. The V1 stretch occupies residues 131–156 (CTDLKNDTNTNSSSGRMIMEKGEIKN). A V2 region spans residues 157-196 (CSFNISTSIRGKVQKEYAFFYKLDIIPIDNDTTSYTLTSC). Residues 296–330 (CTRPNNNTRKSIRIQRGPGRAFVTIGKIGNMRQAH) are V3. Residues C296 and C331 are joined by a disulfide bond. The CD4-binding loop stretch occupies residues 364 to 374 (SSGGDPEIVTH). 2 cysteine pairs are disulfide-bonded: C378/C445 and C385/C418. The interval 385-418 (CNSTQLFNSTWFNSTWSTKGSNNTEGSDTITLPC) is V4. N-linked (GlcNAc...) asparagine; by host glycosylation is found at N386, N392, N397, N406, N448, and N463. 2 V5 regions span residues 461–471 (SNNESEIFRPG) and 463–471 (NESEIFRPG). Residues 512 to 532 (AVGIGALFLGFLGAAGSTMGA) are fusion peptide. Residues 574–592 (KQLQARILAVERYLKDQQL) form an immunosuppression region. A disulfide bridge connects residues C598 and C604. 4 N-linked (GlcNAc...) asparagine; by host glycosylation sites follow: N611, N616, N625, and N637. Residues 633-667 (REINNYTSLIHSLIEESQNQQEKNEQELLELDKWA) are a coiled coil. The involved in GalCer binding stretch occupies residues 662–667 (ELDKWA). An MPER; binding to GalCer region spans residues 662 to 683 (ELDKWASLWNWFNITNWLWYIK). N674 carries an N-linked (GlcNAc...) asparagine; by host glycan. The helical transmembrane segment at 685 to 705 (FIMIVGGLVGLRIVFAVLSVV) threads the bilayer. The Cytoplasmic portion of the chain corresponds to 706–856 (NRVRQGYSPL…IRQGLERILL (151 aa)). A YXXL motif; contains endocytosis signal motif is present at residues 712-715 (YSPL). Residues 721-740 (LPIPRGPDRPEGIEEEGGER) form a disordered region. The S-palmitoyl cysteine; by host moiety is linked to residue C764. A Di-leucine internalization motif motif is present at residues 855 to 856 (LL).

It belongs to the HIV-1 env protein family. As to quaternary structure, the mature envelope protein (Env) consists of a homotrimer of non-covalently associated gp120-gp41 heterodimers. The resulting complex protrudes from the virus surface as a spike. There seems to be as few as 10 spikes on the average virion. Interacts with host CD4, CCR5 and CXCR4. Gp120 also interacts with the C-type lectins CD209/DC-SIGN and CLEC4M/DC-SIGNR (collectively referred to as DC-SIGN(R)). Gp120 and gp41 interact with GalCer. Gp120 interacts with host ITGA4/ITGB7 complex; on CD4+ T-cells, this interaction results in rapid activation of integrin ITGAL/LFA-1, which facilitates efficient cell-to-cell spreading of HIV-1. Gp120 interacts with cell-associated heparan sulfate; this interaction increases virus infectivity on permissive cells and may be involved in infection of CD4- cells. The mature envelope protein (Env) consists of a homotrimer of non-covalently associated gp120-gp41 heterodimers. The resulting complex protrudes from the virus surface as a spike. There seems to be as few as 10 spikes on the average virion. Highly glycosylated by host. The high number of glycan on the protein is reffered to as 'glycan shield' because it contributes to hide protein sequence from adaptive immune system. In terms of processing, palmitoylation of the transmembrane protein and of Env polyprotein (prior to its proteolytic cleavage) is essential for their association with host cell membrane lipid rafts. Palmitoylation is therefore required for envelope trafficking to classical lipid rafts, but not for viral replication. Post-translationally, specific enzymatic cleavages in vivo yield mature proteins. Envelope glycoproteins are synthesized as an inactive precursor that is heavily N-glycosylated and processed likely by host cell furin in the Golgi to yield the mature SU and TM proteins. The cleavage site between SU and TM requires the minimal sequence [KR]-X-[KR]-R. About 2 of the 9 disulfide bonds of gp41 are reduced by P4HB/PDI, following binding to CD4 receptor.

The protein localises to the virion membrane. Its subcellular location is the host cell membrane. It localises to the host endosome membrane. Its function is as follows. Oligomerizes in the host endoplasmic reticulum into predominantly trimers. In a second time, gp160 transits in the host Golgi, where glycosylation is completed. The precursor is then proteolytically cleaved in the trans-Golgi and thereby activated by cellular furin or furin-like proteases to produce gp120 and gp41. In terms of biological role, attaches the virus to the host lymphoid cell by binding to the primary receptor CD4. This interaction induces a structural rearrangement creating a high affinity binding site for a chemokine coreceptor like CXCR4 and/or CCR5. Acts as a ligand for CD209/DC-SIGN and CLEC4M/DC-SIGNR, which are respectively found on dendritic cells (DCs), and on endothelial cells of liver sinusoids and lymph node sinuses. These interactions allow capture of viral particles at mucosal surfaces by these cells and subsequent transmission to permissive cells. HIV subverts the migration properties of dendritic cells to gain access to CD4+ T-cells in lymph nodes. Virus transmission to permissive T-cells occurs either in trans (without DCs infection, through viral capture and transmission), or in cis (following DCs productive infection, through the usual CD4-gp120 interaction), thereby inducing a robust infection. In trans infection, bound virions remain infectious over days and it is proposed that they are not degraded, but protected in non-lysosomal acidic organelles within the DCs close to the cell membrane thus contributing to the viral infectious potential during DCs' migration from the periphery to the lymphoid tissues. On arrival at lymphoid tissues, intact virions recycle back to DCs' cell surface allowing virus transmission to CD4+ T-cells. Acts as a class I viral fusion protein. Under the current model, the protein has at least 3 conformational states: pre-fusion native state, pre-hairpin intermediate state, and post-fusion hairpin state. During fusion of viral and target intracellular membranes, the coiled coil regions (heptad repeats) assume a trimer-of-hairpins structure, positioning the fusion peptide in close proximity to the C-terminal region of the ectodomain. The formation of this structure appears to drive apposition and subsequent fusion of viral and target cell membranes. Complete fusion occurs in host cell endosomes and is dynamin-dependent, however some lipid transfer might occur at the plasma membrane. The virus undergoes clathrin-dependent internalization long before endosomal fusion, thus minimizing the surface exposure of conserved viral epitopes during fusion and reducing the efficacy of inhibitors targeting these epitopes. Membranes fusion leads to delivery of the nucleocapsid into the cytoplasm. In Homo sapiens (Human), this protein is Envelope glycoprotein gp160.